The sequence spans 630 residues: Phosphomethylpyrimidine synthase (630 aa).

Residues asparagine 227, methionine 256, tyrosine 285, histidine 321, 341–343 (SRG), 382–385 (DGLR), and glutamate 421 contribute to the substrate site. Zn(2+) is bound at residue histidine 425. Position 448 (tyrosine 448) interacts with substrate. Histidine 489 lines the Zn(2+) pocket. Residues cysteine 569, cysteine 572, and cysteine 577 each contribute to the [4Fe-4S] cluster site.

It belongs to the ThiC family. In terms of assembly, homodimer. Requires [4Fe-4S] cluster as cofactor.

The enzyme catalyses 5-amino-1-(5-phospho-beta-D-ribosyl)imidazole + S-adenosyl-L-methionine = 4-amino-2-methyl-5-(phosphooxymethyl)pyrimidine + CO + 5'-deoxyadenosine + formate + L-methionine + 3 H(+). The protein operates within cofactor biosynthesis; thiamine diphosphate biosynthesis. Its function is as follows. Catalyzes the synthesis of the hydroxymethylpyrimidine phosphate (HMP-P) moiety of thiamine from aminoimidazole ribotide (AIR) in a radical S-adenosyl-L-methionine (SAM)-dependent reaction. The protein is Phosphomethylpyrimidine synthase of Hydrogenovibrio crunogenus (strain DSM 25203 / XCL-2) (Thiomicrospira crunogena).